The sequence spans 302 residues: MKSNNILDIETENINKNSLDIDKKSTSEIIKIINNEDIKVAYAIKKELNQISNVIDLIFERFKKGGRLIYIGSGTSGRLGILDASEMYPTYGIDQNRIIGIIAGGNKAIKNPIEGAEDNEKLAIVDLNKIKLNSFDTVIGIASSGKTPYVLSALKYANKKDALSIGLCMVKNSEMTKIANQVISIKTGAEIITGSTRMKAGTATKLVCNMITTTLMIKLGKVYKNLMIDLVATNDKLKNRAFKIVKQLTSAKDQIIYKALAESNFSCKHAIVMILRKISYNESVLLLENCDNSLTKLLEEKV.

Positions 58-221 constitute an SIS domain; it reads IFERFKKGGR…TTTLMIKLGK (164 aa). Glutamate 86 (proton donor) is an active-site residue. Glutamate 117 is an active-site residue.

This sequence belongs to the GCKR-like family. MurNAc-6-P etherase subfamily. Homodimer.

It catalyses the reaction N-acetyl-D-muramate 6-phosphate + H2O = N-acetyl-D-glucosamine 6-phosphate + (R)-lactate. The protein operates within amino-sugar metabolism; N-acetylmuramate degradation. In terms of biological role, specifically catalyzes the cleavage of the D-lactyl ether substituent of MurNAc 6-phosphate, producing GlcNAc 6-phosphate and D-lactate. The protein is N-acetylmuramic acid 6-phosphate etherase of Mycoplasma mycoides subsp. mycoides SC (strain CCUG 32753 / NCTC 10114 / PG1).